A 126-amino-acid polypeptide reads, in one-letter code: MMPGGATVTVRLVRSFEHRNFRPVVYHGVNLDQTVREFIVQINEDIPHRAALPLPFKKYSYDTLKIIHQPHGAKTNELVVGLEDDERLILAPGGTLREAGVAHETELAFFCHKDYQTYKANPVSKW.

It belongs to the UPF0538 family.

The polypeptide is UPF0538 protein C2orf76 homolog (Xenopus tropicalis (Western clawed frog)).